A 231-amino-acid chain; its full sequence is NADH-ubiquinone oxidoreductase chain 4 (231 aa).

7 consecutive transmembrane segments (helical) span residues 1–21 (PIAG…YGII), 34–54 (LFLP…LTCL), 63–85 (IAYS…TPWG), 89–111 (AMAL…NTTY), 128–148 (ILPM…AIPP), 156–176 (LLIM…LGLS), and 211–231 (LLIA…ELVI).

It belongs to the complex I subunit 4 family.

It localises to the mitochondrion membrane. The catalysed reaction is a ubiquinone + NADH + 5 H(+)(in) = a ubiquinol + NAD(+) + 4 H(+)(out). Its function is as follows. Core subunit of the mitochondrial membrane respiratory chain NADH dehydrogenase (Complex I) that is believed to belong to the minimal assembly required for catalysis. Complex I functions in the transfer of electrons from NADH to the respiratory chain. The immediate electron acceptor for the enzyme is believed to be ubiquinone. The protein is NADH-ubiquinone oxidoreductase chain 4 (MT-ND4) of Crotalus adamanteus (Eastern diamondback rattlesnake).